A 447-amino-acid chain; its full sequence is Elongation factor 1-alpha (447 aa).

The 226-residue stretch at 5–230 (KIHISIVVIG…DQISEPKRPS (226 aa)) folds into the tr-type G domain. The tract at residues 14–21 (GHVDSGKS) is G1. 14–21 (GHVDSGKS) lines the GTP pocket. An N6,N6-dimethyllysine modification is found at K55. Positions 70–74 (GITID) are G2. The residue at position 79 (K79) is an N6,N6,N6-trimethyllysine. A G3 region spans residues 91 to 94 (DAPG). Residues 91–95 (DAPGH) and 153–156 (NKMD) each bind GTP. Positions 153–156 (NKMD) are G4. K187 is modified (N6,N6,N6-trimethyllysine). Residues 194–196 (SGF) form a G5 region. The residue at position 261 (K261) is an N6-methyllysine. The residue at position 289 (E289) is a 5-glutamyl glycerylphosphorylethanolamine. K306 bears the N6,N6,N6-trimethyllysine mark. At E362 the chain carries 5-glutamyl glycerylphosphorylethanolamine. K396 bears the N6,N6,N6-trimethyllysine mark.

The protein belongs to the TRAFAC class translation factor GTPase superfamily. Classic translation factor GTPase family. EF-Tu/EF-1A subfamily.

It is found in the cytoplasm. Functionally, this protein promotes the GTP-dependent binding of aminoacyl-tRNA to the A-site of ribosomes during protein biosynthesis. The chain is Elongation factor 1-alpha from Daucus carota (Wild carrot).